The sequence spans 120 residues: UPF0231 protein YacL (120 aa).

The protein belongs to the UPF0231 family.

This is UPF0231 protein YacL from Escherichia coli (strain SMS-3-5 / SECEC).